A 48-amino-acid chain; its full sequence is Large ribosomal subunit protein bL34 (48 aa).

The protein belongs to the bacterial ribosomal protein bL34 family.

The sequence is that of Large ribosomal subunit protein bL34 (rpmH) from Mycoplasma genitalium (strain ATCC 33530 / DSM 19775 / NCTC 10195 / G37) (Mycoplasmoides genitalium).